We begin with the raw amino-acid sequence, 424 residues long: Glutamate-1-semialdehyde 2,1-aminomutase (424 aa).

The residue at position 258 (K258) is an N6-(pyridoxal phosphate)lysine.

This sequence belongs to the class-III pyridoxal-phosphate-dependent aminotransferase family. HemL subfamily. The cofactor is pyridoxal 5'-phosphate.

The protein resides in the cytoplasm. The enzyme catalyses (S)-4-amino-5-oxopentanoate = 5-aminolevulinate. Its pathway is porphyrin-containing compound metabolism; protoporphyrin-IX biosynthesis; 5-aminolevulinate from L-glutamyl-tRNA(Glu): step 2/2. This Pyrobaculum islandicum (strain DSM 4184 / JCM 9189 / GEO3) protein is Glutamate-1-semialdehyde 2,1-aminomutase.